A 984-amino-acid chain; its full sequence is Valine--tRNA ligase (984 aa).

Positions 65-75 (PNVTGSLHMGH) match the 'HIGH' region motif. Residues 579–583 (KMSKS) carry the 'KMSKS' region motif. Lys-582 is a binding site for ATP. Residues 954–984 (VEVVDAEKAKLAELEGQLTAMTAQMEELKNL) adopt a coiled-coil conformation.

It belongs to the class-I aminoacyl-tRNA synthetase family. ValS type 1 subfamily. Monomer.

Its subcellular location is the cytoplasm. It catalyses the reaction tRNA(Val) + L-valine + ATP = L-valyl-tRNA(Val) + AMP + diphosphate. In terms of biological role, catalyzes the attachment of valine to tRNA(Val). As ValRS can inadvertently accommodate and process structurally similar amino acids such as threonine, to avoid such errors, it has a 'posttransfer' editing activity that hydrolyzes mischarged Thr-tRNA(Val) in a tRNA-dependent manner. This Psychrobacter arcticus (strain DSM 17307 / VKM B-2377 / 273-4) protein is Valine--tRNA ligase.